Reading from the N-terminus, the 161-residue chain is uncharacterized protein (161 aa).

This is an uncharacterized protein from Sinorhizobium fredii (strain NBRC 101917 / NGR234).